Here is a 25-residue protein sequence, read N- to C-terminus: Acyl carrier protein (25 aa).

Residues 2–25 (ESIEQRVKKIVAEQLGVAEAEIKA) enclose the Carrier domain.

The protein belongs to the acyl carrier protein (ACP) family. In terms of processing, 4'-phosphopantetheine is transferred from CoA to a specific serine of apo-ACP by AcpS. This modification is essential for activity because fatty acids are bound in thioester linkage to the sulfhydryl of the prosthetic group.

Its subcellular location is the cytoplasm. The protein operates within lipid metabolism; fatty acid biosynthesis. Its function is as follows. Carrier of the growing fatty acid chain in fatty acid biosynthesis. The chain is Acyl carrier protein (acpP) from Alcaligenes faecalis.